Consider the following 208-residue polypeptide: ATP-dependent Clp protease proteolytic subunit (208 aa).

The active-site Nucleophile is the Ser105. His130 is an active-site residue.

The protein belongs to the peptidase S14 family. As to quaternary structure, fourteen ClpP subunits assemble into 2 heptameric rings which stack back to back to give a disk-like structure with a central cavity, resembling the structure of eukaryotic proteasomes.

Its subcellular location is the cytoplasm. The enzyme catalyses Hydrolysis of proteins to small peptides in the presence of ATP and magnesium. alpha-casein is the usual test substrate. In the absence of ATP, only oligopeptides shorter than five residues are hydrolyzed (such as succinyl-Leu-Tyr-|-NHMec, and Leu-Tyr-Leu-|-Tyr-Trp, in which cleavage of the -Tyr-|-Leu- and -Tyr-|-Trp bonds also occurs).. Its function is as follows. Cleaves peptides in various proteins in a process that requires ATP hydrolysis. Has a chymotrypsin-like activity. Plays a major role in the degradation of misfolded proteins. The protein is ATP-dependent Clp protease proteolytic subunit of Xylella fastidiosa (strain M12).